The chain runs to 152 residues: SXP/RAL-2 family protein Ani s 5 (152 aa).

The signal sequence occupies residues 1–18; that stretch reads MKTLIVAALFCTIGMALA. 4 necessary for IgE-binding regions span residues 25–42, 49–54, 58–66, and 103–120; these read PPFL…FFEL, KTDPEI, LDAWVDTLG, and KKAD…SLNG. 2 igG4-binding regions span residues 49 to 68 and 118 to 137; these read KTDP…LGGD and LNGI…LPQS. Residues 127-146 form an igE-binding and IgG4-binding region; the sequence is IQAIYKTLPQSVKDELEKGI.

This sequence belongs to the SXP/RAL-2 family. As to quaternary structure, monomer. As to expression, excretory gland, ventriculus, and the luminal epithelium of the intestine of the larvae.

The protein resides in the secreted. In Anisakis simplex (Herring worm), this protein is SXP/RAL-2 family protein Ani s 5.